A 319-amino-acid polypeptide reads, in one-letter code: COP9 signalosome complex subunit 6 (319 aa).

Residues 33 to 166 (VALHPLVILN…VSVYESVIDI (134 aa)) form the MPN domain.

It belongs to the peptidase M67A family. CSN6 subfamily. As to quaternary structure, component of the CSN complex, probably composed of cops1, cops2, cops3, cops4, cops5, cops6, cops7, cops8 and cops9.

It is found in the cytoplasm. The protein resides in the nucleus. In terms of biological role, component of the COP9 signalosome complex (CSN), a complex involved in various cellular and developmental processes. The CSN complex is an essential regulator of the ubiquitin (Ubl) conjugation pathway by mediating the deneddylation of the cullin subunits of E3 ligase complexes, leading to modify the Ubl ligase activity. The protein is COP9 signalosome complex subunit 6 (cops6) of Xenopus tropicalis (Western clawed frog).